The following is a 287-amino-acid chain: Kit ligand (287 aa).

The N-terminal stretch at 1-25 (MKKAQTWIITCFCLQLLLLNPLVKT) is a signal peptide. Residues 26-225 (QSSCGNPVTD…LGFISSSSLQ (200 aa)) lie on the Extracellular side of the membrane. 2 disulfide bridges follow: Cys29-Cys117 and Cys68-Cys167. Asn100, Asn106, Asn149, Asn178, Asn200, and Asn206 each carry an N-linked (GlcNAc...) asparagine glycan. The helical transmembrane segment at 226–246 (GISIALTSLLSLLIGFILGVI) threads the bilayer. The Cytoplasmic segment spans residues 247-287 (YWKKTHPKSRPESNETTQCHGCQEENEISMLQQKEKEHLQV).

The protein belongs to the SCF family. In terms of assembly, homodimer, non-covalently linked. A soluble form is produced by proteolytic processing of isoform 1 in the extracellular domain.

The protein localises to the cell membrane. It is found in the secreted. Its subcellular location is the cytoplasm. It localises to the cytoskeleton. The protein resides in the cell projection. The protein localises to the lamellipodium. It is found in the filopodium. Ligand for the receptor-type protein-tyrosine kinase KIT. Plays an essential role in the regulation of cell survival and proliferation, hematopoiesis, stem cell maintenance, gametogenesis, mast cell development, migration and function, and in melanogenesis. KITLG/SCF binding can activate several signaling pathways. Acts synergistically with other cytokines, probably interleukins. In Coturnix japonica (Japanese quail), this protein is Kit ligand (KITLG).